Here is a 425-residue protein sequence, read N- to C-terminus: MLTWPAPQIPELPGRGDVVRVHDSSTGRLVVAAEGPSASLYVCGITPYDATHIGHAATYVAFDLLGRAWRDAGQQVTYASNVTDVDDPLLERATATGVEWQDLAVEQTALFAEDMTALGVVPPDVYLGAVETIPPVAAAVEELVAAGAAYRVPLEEGAGGDAPALGDVYADVTADSAFGQVSRMDEATMLELFAERGGDPGRAGKRNALDPLLWRRERPGEPAWEAGSLGTGRPGWHIECAVIARAGLGLPFDVQGGGSDLLFPHHEMSTSHARLIGDGDVHGVGAATHVHAGLVGYQGEKMSKSRGNLVFVSRLRAEGVEPMAIRLALLAHHYRSDWEWTDASLTEGVARFETWRSAVSGNGGPDADATLAEVRAALADDLDAPRALAAVDRWAELSLAGTEKPVEGAPGVVSRAVNALLGVRL.

C43 lines the Zn(2+) pocket. L-cysteinyl-5'-AMP is bound by residues 43–46, T58, and 81–83; these read CGIT and NVT. Positions 45 to 55 match the 'HIGH' region motif; sequence ITPYDATHIGH. The 'ERGGDP' region signature appears at 195-200; that stretch reads ERGGDP. L-cysteinyl-5'-AMP is bound at residue W236. C240 contacts Zn(2+). 258–260 lines the L-cysteinyl-5'-AMP pocket; that stretch reads GSD. H265 provides a ligand contact to Zn(2+). An L-cysteinyl-5'-AMP-binding site is contributed by V295. A 'KMSKS' region motif is present at residues 301–305; it reads KMSKS.

The protein belongs to the class-I aminoacyl-tRNA synthetase family. MshC subfamily. Monomer. Zn(2+) serves as cofactor.

The enzyme catalyses 1D-myo-inositol 2-amino-2-deoxy-alpha-D-glucopyranoside + L-cysteine + ATP = 1D-myo-inositol 2-(L-cysteinylamino)-2-deoxy-alpha-D-glucopyranoside + AMP + diphosphate + H(+). In terms of biological role, catalyzes the ATP-dependent condensation of GlcN-Ins and L-cysteine to form L-Cys-GlcN-Ins. The chain is L-cysteine:1D-myo-inositol 2-amino-2-deoxy-alpha-D-glucopyranoside ligase from Sanguibacter keddieii (strain ATCC 51767 / DSM 10542 / NCFB 3025 / ST-74).